The sequence spans 175 residues: Large ribosomal subunit protein uL10 (175 aa).

It belongs to the universal ribosomal protein uL10 family. In terms of assembly, part of the ribosomal stalk of the 50S ribosomal subunit. The N-terminus interacts with L11 and the large rRNA to form the base of the stalk. The C-terminus forms an elongated spine to which L12 dimers bind in a sequential fashion forming a multimeric L10(L12)X complex.

In terms of biological role, forms part of the ribosomal stalk, playing a central role in the interaction of the ribosome with GTP-bound translation factors. The protein is Large ribosomal subunit protein uL10 of Prochlorococcus marinus (strain MIT 9313).